Consider the following 399-residue polypeptide: RNA polymerase sigma factor SigA1 (399 aa).

The tract at residues 1–73 is disordered; the sequence is MTQLISIDKE…DEDSVGEDED (73 aa). Residues 60–73 are compositionally biased toward acidic residues; it reads DAIDDEDSVGEDED. Residues 167–237 are sigma-70 factor domain-2; the sequence is MVQSNLRLVV…TRAIADQSRT (71 aa). Residues 191–194 carry the Interaction with polymerase core subunit RpoC motif; it reads DLIQ. The sigma-70 factor domain-3 stretch occupies residues 246–321; sequence ETISRIKKTT…EADGETPEDE (76 aa). The tract at residues 334-387 is sigma-70 factor domain-4; that stretch reads VLSTLSPRERDVLRLRYGLDDGRMKTLEEIGQLFNVTRERIRQIEAKALRKLRH. The segment at residues 360–379 is a DNA-binding region (H-T-H motif); sequence LEEIGQLFNVTRERIRQIEA.

This sequence belongs to the sigma-70 factor family. RpoD/SigA subfamily. In terms of assembly, interacts transiently with the RNA polymerase catalytic core.

It localises to the cytoplasm. Functionally, sigma factors are initiation factors that promote the attachment of RNA polymerase to specific initiation sites and are then released. This sigma factor is the primary sigma factor during exponential growth. This Synechococcus elongatus (strain ATCC 33912 / PCC 7942 / FACHB-805) (Anacystis nidulans R2) protein is RNA polymerase sigma factor SigA1.